A 589-amino-acid chain; its full sequence is Serine/threonine-protein kinase PknJ (589 aa).

Over Met1 to Arg342 the chain is Cytoplasmic. Residues Tyr14–Ala276 form the Protein kinase domain. ATP is bound by residues Leu20–Val28 and Lys43. Residue Asp136 is the Proton acceptor of the active site. A helical transmembrane segment spans residues Gly343–Met363. At Thr364–Gly589 the chain is on the extracellular side. A compositionally biased stretch (low complexity) spans Ser365–Thr387. The tract at residues Ser365–Pro400 is disordered.

It belongs to the protein kinase superfamily. Ser/Thr protein kinase family. In terms of assembly, homodimer.

The protein localises to the cell membrane. The catalysed reaction is L-seryl-[protein] + ATP = O-phospho-L-seryl-[protein] + ADP + H(+). The enzyme catalyses L-threonyl-[protein] + ATP = O-phospho-L-threonyl-[protein] + ADP + H(+). This chain is Serine/threonine-protein kinase PknJ (pknJ), found in Mycobacterium bovis (strain ATCC BAA-935 / AF2122/97).